The following is a 409-amino-acid chain: Argininosuccinate synthase (409 aa).

Residues 8 to 16 and alanine 34 each bind ATP; that span reads AYSGGLDTS. Tyrosine 85 contacts L-citrulline. Glycine 115 is an ATP binding site. L-aspartate is bound by residues threonine 117, asparagine 121, and aspartate 122. Asparagine 121 is a binding site for L-citrulline. Arginine 125, serine 178, serine 187, glutamate 268, and tyrosine 280 together coordinate L-citrulline.

It belongs to the argininosuccinate synthase family. Type 1 subfamily. As to quaternary structure, homotetramer.

It is found in the cytoplasm. It carries out the reaction L-citrulline + L-aspartate + ATP = 2-(N(omega)-L-arginino)succinate + AMP + diphosphate + H(+). It participates in amino-acid biosynthesis; L-arginine biosynthesis; L-arginine from L-ornithine and carbamoyl phosphate: step 2/3. This chain is Argininosuccinate synthase, found in Thermotoga petrophila (strain ATCC BAA-488 / DSM 13995 / JCM 10881 / RKU-1).